Reading from the N-terminus, the 338-residue chain is Glycerol-3-phosphate dehydrogenase [NAD(P)+] (338 aa).

S13, W14, and K108 together coordinate NADPH. Sn-glycerol 3-phosphate is bound by residues K108, G139, and S141. A143 provides a ligand contact to NADPH. Sn-glycerol 3-phosphate is bound by residues K194, D247, S257, R258, and N259. K194 acts as the Proton acceptor in catalysis. Residue R258 participates in NADPH binding. Residues V282 and E284 each contribute to the NADPH site.

The protein belongs to the NAD-dependent glycerol-3-phosphate dehydrogenase family.

It is found in the cytoplasm. The enzyme catalyses sn-glycerol 3-phosphate + NAD(+) = dihydroxyacetone phosphate + NADH + H(+). It catalyses the reaction sn-glycerol 3-phosphate + NADP(+) = dihydroxyacetone phosphate + NADPH + H(+). It participates in membrane lipid metabolism; glycerophospholipid metabolism. In terms of biological role, catalyzes the reduction of the glycolytic intermediate dihydroxyacetone phosphate (DHAP) to sn-glycerol 3-phosphate (G3P), the key precursor for phospholipid synthesis. The chain is Glycerol-3-phosphate dehydrogenase [NAD(P)+] from Streptococcus pneumoniae (strain CGSP14).